A 345-amino-acid polypeptide reads, in one-letter code: RNA polymerase II holoenzyme cyclin-like subunit (345 aa).

The region spanning 53-144 (QQINRLGKRM…IGECEFYLIS (92 aa)) is the Cyclin N-terminal domain. The interval 256 to 285 (GLTPQSSSGLQAMLPPQSPAGEGPAEGNKN) is disordered.

Belongs to the cyclin family. Cyclin C subfamily. Component of the srb8-11 complex, a regulatory module of the Mediator complex.

It is found in the nucleus. Functionally, component of the srb8-11 complex. The srb8-11 complex is a regulatory module of the Mediator complex which is itself involved in regulation of basal and activated RNA polymerase II-dependent transcription. The srb8-11 complex may be involved in the transcriptional repression of a subset of genes regulated by Mediator. It may inhibit the association of the Mediator complex with RNA polymerase II to form the holoenzyme complex. The srb8-11 complex phosphorylates the C-terminal domain (CTD) of the largest subunit of RNA polymerase II. This chain is RNA polymerase II holoenzyme cyclin-like subunit (ssn8), found in Neurospora crassa (strain ATCC 24698 / 74-OR23-1A / CBS 708.71 / DSM 1257 / FGSC 987).